The primary structure comprises 181 residues: Oligoribonuclease (181 aa).

The 164-residue stretch at 8 to 171 (LIWLDLEMTG…DDIKESIAEL (164 aa)) folds into the Exonuclease domain. Tyrosine 129 is a catalytic residue.

Belongs to the oligoribonuclease family.

The protein resides in the cytoplasm. Functionally, 3'-to-5' exoribonuclease specific for small oligoribonucleotides. This Colwellia psychrerythraea (strain 34H / ATCC BAA-681) (Vibrio psychroerythus) protein is Oligoribonuclease.